Consider the following 353-residue polypeptide: Green-sensitive opsin-2 (353 aa).

At Met1–Val47 the chain is on the extracellular side. Asn29 carries an N-linked (GlcNAc...) asparagine glycan. Residues Tyr48–Ala72 form a helical membrane-spanning segment. At Thr73 to Asn84 the chain is on the cytoplasmic side. A helical membrane pass occupies residues Trp85–Ile110. The Extracellular portion of the chain corresponds to Phe111 to Glu124. The cysteines at positions 121 and 198 are disulfide-linked. The helical transmembrane segment at Gly125–Trp144 threads the bilayer. Residues Glu145 to Trp163 are Cytoplasmic-facing. The chain crosses the membrane as a helical span at residues Ala164–Ser187. The Extracellular portion of the chain corresponds to Arg188 to Ser213. The helical transmembrane segment at Tyr214 to Ile241 threads the bilayer. The Cytoplasmic portion of the chain corresponds to His242–Arg263. Residues Met264 to Ala287 form a helical membrane-spanning segment. Residues Val288–His295 lie on the Extracellular side of the membrane. The helical transmembrane segment at Pro296–Met320 threads the bilayer. Residue Lys307 is modified to N6-(retinylidene)lysine. The Cytoplasmic portion of the chain corresponds to Asn321–Ser353.

This sequence belongs to the G-protein coupled receptor 1 family. Opsin subfamily. As to expression, the color pigments are found in the cone photoreceptor cells.

The protein localises to the membrane. Visual pigments are the light-absorbing molecules that mediate vision. They consist of an apoprotein, opsin, covalently linked to cis-retinal. This chain is Green-sensitive opsin-2 (G101), found in Psalidodon fasciatus (Banded astyanax).